Here is a 317-residue protein sequence, read N- to C-terminus: Uridine phosphorylase 2 (317 aa).

Phosphate contacts are provided by residues G66, R100, and 144–147 (RIGT). A disulfide bond links C95 and C102. Residues 148–149 (SG) and 223–225 (QGR) each bind uridine.

This sequence belongs to the PNP/UDP phosphorylase family. In terms of assembly, homodimer. In terms of tissue distribution, predominantly expressed in kidney.

It catalyses the reaction uridine + phosphate = alpha-D-ribose 1-phosphate + uracil. The enzyme catalyses 2'-deoxyuridine + phosphate = 2-deoxy-alpha-D-ribose 1-phosphate + uracil. It functions in the pathway pyrimidine metabolism; UMP biosynthesis via salvage pathway; uracil from uridine (phosphorylase route): step 1/1. With respect to regulation, a conditional disulfide bridge can form within the protein that dislocates a critical phosphate-coordinating arginine Arg-100 away from the active site, disabling the enzyme. Catalyzes the reversible phosphorylytic cleavage of uridine to uracil and ribose-1-phosphate which can then be utilized as carbon and energy sources or in the rescue of pyrimidine bases for nucleotide synthesis. Shows broad substrate specificity and can also accept deoxyuridine and other analogous compounds. The protein is Uridine phosphorylase 2 of Homo sapiens (Human).